Reading from the N-terminus, the 1310-residue chain is Adhesion G protein-coupled receptor A3 (1310 aa).

An N-terminal signal peptide occupies residues 1–27 (MEPPPPLLLLPLALLALLWGGERGAAA). The 43-residue stretch at 28–70 (LPAGCKHDGRARGTGRAAAAAEGKVVCSSLELAQVLPPDTLPN) folds into the LRRNT domain. Over 28-747 (LPAGCKHDGR…TELYTPAASL (720 aa)) the chain is Extracellular. Asn-70 and Asn-87 each carry an N-linked (GlcNAc...) asparagine glycan. LRR repeat units follow at residues 71–92 (RTVT…SFSG), 95–116 (LLER…AFWG), 119–140 (SLKR…VFRG), and 143–164 (NLVR…TFDY). Residues Asn-148, Asn-195, Asn-290, Asn-321, Asn-422, Asn-442, Asn-581, Asn-641, Asn-676, and Asn-717 are each glycosylated (N-linked (GlcNAc...) asparagine). The 51-residue stretch at 176-226 (EYLLCDCNILWMHRWVKERNITVRDTRCVYPKSLQAQPVTGVKQELLTCDP) folds into the LRRCT domain. The region spanning 231–329 (PSFYMTPSHR…GNNTRTVDIV (99 aa)) is the Ig-like domain. Cys-253 and Cys-313 are joined by a disulfide. The region spanning 572-739 (LDKQLSFKCN…AVLMDLTGTE (168 aa)) is the GAIN-B domain. Residues 690–739 (AAQWDFDLLNGQGGWKSDGCCILYSDENITTIQCGSLGNYAVLMDLTGTE) are GPS. The cysteines at positions 709 and 723 are disulfide-linked. Residues 748–768 (LHPVVYTTAITLLLCLLAVII) form a helical membrane-spanning segment. Topologically, residues 769-785 (SYMYHHSLIRISLKSWH) are cytoplasmic. The helical transmembrane segment at 786-806 (MLVNLCFHILLTCVVFVGGIT) threads the bilayer. The Extracellular portion of the chain corresponds to 807 to 815 (QTRNASVCQ). N-linked (GlcNAc...) asparagine glycosylation is present at Asn-810. The helical transmembrane segment at 816-836 (AVGIILHYSTLATVLWVGVTA) threads the bilayer. Topologically, residues 837-865 (RNIYKQVTKKAKRCQDPDEPPAPPRPMLR) are cytoplasmic. A helical transmembrane segment spans residues 866–886 (FYLIGGGIPIIVCGITAAANI). The Extracellular segment spans residues 887–908 (KNYGSRPSAPYCWMAWEPSLGA). Residues 909-929 (FYGPASFITFVNCMYFLSIFI) traverse the membrane as a helical segment. Topologically, residues 930 to 985 (QLKRHPERKYELKEPTEEQQRLAANENGEINHQDSMSLSLISTSTLENEHSFQSQL) are cytoplasmic. A helical transmembrane segment spans residues 986–1006 (LGASLTLLLYVILWMFGAMAV). Over 1007–1013 (SLYYPLD) the chain is Extracellular. Residues 1014 to 1034 (LVFSFFFGATCLSFSAFMMVH) form a helical membrane-spanning segment. The Cytoplasmic segment spans residues 1035–1310 (HCINREDVRL…TGLWKHETTV (276 aa)). 3 disordered regions span residues 1065–1084 (PPNS…SSAE), 1187–1208 (VEGS…GHSR), and 1221–1264 (YNPP…ADLE). The segment covering 1222–1239 (NPPQQDSSDACSTLPKSS) has biased composition (polar residues). Positions 1308 to 1310 (TTV) match the PDZ-binding motif.

It belongs to the G-protein coupled receptor 2 family. Adhesion G-protein coupled receptor (ADGR) subfamily. As to quaternary structure, interacts (via PDZ-binding motif) with DLG1. In terms of tissue distribution, expressed by spermatogonial progenitor cells located within the outer cell layer of the seminiferous tubule and by multipotent adult spermatogonial-derived stem cells.

It localises to the membrane. Functionally, orphan receptor that may have a role in planar cell polarity pathway. This chain is Adhesion G protein-coupled receptor A3 (Adgra3), found in Mus musculus (Mouse).